We begin with the raw amino-acid sequence, 289 residues long: Putative transmembrane protein ORF111 (289 aa).

5 helical membrane-spanning segments follow: residues 1–21 (MIGP…IFML), 112–132 (AIIT…VCIA), 151–171 (IGIT…FIVI), 189–209 (LNIS…TSIL), and 261–281 (YLLT…IGVG).

The protein localises to the host membrane. This Ostreid herpesvirus 1 (isolate France) (OsHV-1) protein is Putative transmembrane protein ORF111.